A 226-amino-acid chain; its full sequence is Large ribosomal subunit protein uL1 (226 aa).

The protein belongs to the universal ribosomal protein uL1 family. As to quaternary structure, part of the 50S ribosomal subunit.

Functionally, binds directly to 23S rRNA. The L1 stalk is quite mobile in the ribosome, and is involved in E site tRNA release. Protein L1 is also a translational repressor protein, it controls the translation of the L11 operon by binding to its mRNA. This is Large ribosomal subunit protein uL1 from Buchnera aphidicola subsp. Cinara cedri (strain Cc).